Here is a 695-residue protein sequence, read N- to C-terminus: Biosynthetic arginine decarboxylase 1 (695 aa).

Lys141 is subject to N6-(pyridoxal phosphate)lysine. 332–342 lines the substrate pocket; sequence LDVGGGLGVDY.

Belongs to the Orn/Lys/Arg decarboxylase class-II family. SpeA subfamily. The cofactor is Mg(2+). Pyridoxal 5'-phosphate is required as a cofactor.

It catalyses the reaction L-arginine + H(+) = agmatine + CO2. Catalyzes the biosynthesis of agmatine from arginine. In Synechocystis sp. (strain ATCC 27184 / PCC 6803 / Kazusa), this protein is Biosynthetic arginine decarboxylase 1 (speA1).